We begin with the raw amino-acid sequence, 425 residues long: uncharacterized protein (425 aa).

This sequence to K.pneumoniae SorE.

This is an uncharacterized protein from Escherichia coli (strain K12).